A 587-amino-acid chain; its full sequence is Arginine--tRNA ligase (587 aa).

The 'HIGH' region motif lies at 127 to 137 (PNLAKEMHVGH).

It belongs to the class-I aminoacyl-tRNA synthetase family. Monomer.

The protein localises to the cytoplasm. The enzyme catalyses tRNA(Arg) + L-arginine + ATP = L-arginyl-tRNA(Arg) + AMP + diphosphate. The polypeptide is Arginine--tRNA ligase (Pseudomonas aeruginosa (strain UCBPP-PA14)).